Consider the following 200-residue polypeptide: MALWMRLLPLLALLALWGPDPAAAFVNQHLCGSHLVEALYLVCGERGFFYTPKTRREAEDLQASALSLSSSTSTWPEGLDATARAPPALVVTANIGQAGGSSSRQFRQRALGTSDSPVLFIHCPGAAGTAQGLEYRGRRVTTELVWEEVDSSPQPQGSESLPAQPPAQPAPQPEPQQAREPSPEVSCCGLWPRRPQRSQN.

The tract at residues 148–200 is disordered; it reads EVDSSPQPQGSESLPAQPPAQPAPQPEPQQAREPSPEVSCCGLWPRRPQRSQN. Positions 163-174 are enriched in pro residues; the sequence is AQPPAQPAPQPE. The segment covering 175-184 has biased composition (low complexity); that stretch reads PQQAREPSPE.

In terms of tissue distribution, expressed in pancreas, eye and, to a lower extent, in limb.

The chain is Insulin, isoform 2 (INS-IGF2) from Homo sapiens (Human).